A 343-amino-acid chain; its full sequence is Cytoplasmic tRNA 2-thiolation protein 1 (343 aa).

This sequence belongs to the TtcA family. CTU1/NCS6/ATPBD3 subfamily.

It localises to the cytoplasm. It functions in the pathway tRNA modification; 5-methoxycarbonylmethyl-2-thiouridine-tRNA biosynthesis. Its function is as follows. Plays a central role in 2-thiolation of mcm(5)S(2)U at tRNA wobble positions of tRNA(Lys), tRNA(Glu) and tRNA(Gln). Directly binds tRNAs and probably acts by catalyzing adenylation of tRNAs, an intermediate required for 2-thiolation. It is unclear whether it acts as a sulfurtransferase that transfers sulfur from thiocarboxylated URM1 onto the uridine of tRNAs at wobble position. This chain is Cytoplasmic tRNA 2-thiolation protein 1, found in Drosophila virilis (Fruit fly).